The sequence spans 132 residues: Dehydratase CTB10 (132 aa).

An EthD domain is found at 21 to 117 (PDQSEEDHHN…IPDHFNFADM (97 aa)).

The protein belongs to the tpcK family.

Its pathway is mycotoxin biosynthesis. Its function is as follows. Dehydratase; part of the gene cluster that mediates the biosynthesis of cercosporin, a light-activated, non-host-selective toxin. The perylenequinone chromophore of cercosporin absorbs light energy to attain an electronically-activated triplet state and produces active oxygen species such as the hydroxyl radical, superoxide, hydrogen peroxide or singlet oxygen upon reaction with oxygen molecules. These reactive oxygen species cause damage to various cellular components including lipids, proteins and nucleic acids. The first step of cercosporin biosynthesis is performed by the polyketide synthase CTB1 which catalyzes the formation of nor-toralactone. The starter unit acyltransferase (SAT) domain of CTB1 initiates polyketide extension by the selective utilization of acetyl-CoA, which is elongated to the heptaketide in the beta-ketoacyl synthase (KS) domain by successive condensations with six malonyl units introduced by the malonyl acyltransferase (MAT) domain. The product template (PT) domain catalyzes C4-C9 and C2-C11 aldol cyclizations and dehydrations to a trihydroxynaphthalene, which is thought to be delivered to the thioesterase (TE) domain for product release. The bifunctional enzyme CTB3 then methylates nor-toralactone to toralactone before conducting an unusual oxidative aromatic ring opening. The O-methyltransferase CTB2 further methylates the nascent OH-6 of the CBT3 product, blocking further oxidation at this site before the reductase CTB6 reduces the 2-oxopropyl ketone at position C7, giving naphthalene. The FAD-dependent monooxygenase CTB5 in concert with the multicopper oxidase CTB12 are responsible for homodimerization of naphthalene with CTB7 installing the dioxepine moiety, finally producing cercosporin. The fasciclin domain-containing protein CTB11 might act with CTB5 and CTB12 whereas the roles of CTB9 and CTB10 have still to be elucidated. This chain is Dehydratase CTB10, found in Cercospora beticola (Sugarbeet leaf spot fungus).